The sequence spans 150 residues: Anthranilate synthase component 1 (150 aa).

Position 40 (S40) interacts with L-tryptophan. R119 is a chorismate binding site.

It belongs to the anthranilate synthase component I family. Heterotetramer consisting of two non-identical subunits: a beta subunit (TrpG) and a large alpha subunit (TrpE). The cofactor is Mg(2+).

It carries out the reaction chorismate + L-glutamine = anthranilate + pyruvate + L-glutamate + H(+). It functions in the pathway amino-acid biosynthesis; L-tryptophan biosynthesis; L-tryptophan from chorismate: step 1/5. With respect to regulation, feedback inhibited by tryptophan. In terms of biological role, part of a heterotetrameric complex that catalyzes the two-step biosynthesis of anthranilate, an intermediate in the biosynthesis of L-tryptophan. In the first step, the glutamine-binding beta subunit (TrpG) of anthranilate synthase (AS) provides the glutamine amidotransferase activity which generates ammonia as a substrate that, along with chorismate, is used in the second step, catalyzed by the large alpha subunit of AS (TrpE) to produce anthranilate. In the absence of TrpG, TrpE can synthesize anthranilate directly from chorismate and high concentrations of ammonia. This chain is Anthranilate synthase component 1 (trpE), found in Citrobacter freundii.